Reading from the N-terminus, the 434-residue chain is 3-isopropylmalate dehydratase large subunit 1 (434 aa).

[4Fe-4S] cluster-binding residues include cysteine 308, cysteine 368, and cysteine 371.

It belongs to the aconitase/IPM isomerase family. LeuC type 2 subfamily. Heterodimer of LeuC and LeuD. The cofactor is [4Fe-4S] cluster.

It carries out the reaction (2R,3S)-3-isopropylmalate = (2S)-2-isopropylmalate. Its pathway is amino-acid biosynthesis; L-leucine biosynthesis; L-leucine from 3-methyl-2-oxobutanoate: step 2/4. In terms of biological role, catalyzes the isomerization between 2-isopropylmalate and 3-isopropylmalate, via the formation of 2-isopropylmaleate. The polypeptide is 3-isopropylmalate dehydratase large subunit 1 (Deinococcus radiodurans (strain ATCC 13939 / DSM 20539 / JCM 16871 / CCUG 27074 / LMG 4051 / NBRC 15346 / NCIMB 9279 / VKM B-1422 / R1)).